Consider the following 691-residue polypeptide: T-box transcription factor TBX2-B (691 aa).

Positions 104 to 277 (LWDQFHKIGT…HNPFAKGFRD (174 aa)) form a DNA-binding region, T-box. Disordered regions lie at residues 301 to 440 (CKAD…SLSK) and 612 to 691 (NLLT…ESPK). The span at 325-335 (HSPLSAAPSPL) shows a compositional bias: low complexity. 3 stretches are compositionally biased toward basic and acidic residues: residues 340–361 (TNREEKFGADSDQELDRREVRS), 378–402 (RLEDRGKDKSTPEKKSDSPESRKDG), and 415–433 (SLEKDKVESRRKEDSKSDP). A compositionally biased stretch (low complexity) spans 624-639 (PGSESSKPGSSRESSP). The stretch at 659–684 (SMKDSINELQRIQRLVSGLERQREVS) forms a coiled coil. The segment covering 678–691 (ERQREVSPGRESPK) has biased composition (basic and acidic residues).

Binds DNA as a monomer.

Its subcellular location is the nucleus. Functionally, transcription factor which acts as a transcriptional repressor. May also function as a transcriptional activator. Binds to the palindromic T site 5'-TTCACACCTAGGTGTGAA-3' DNA sequence, or a half-site, which are present in the regulatory region of several genes. In Xenopus laevis (African clawed frog), this protein is T-box transcription factor TBX2-B (tbx2-b).